Consider the following 133-residue polypeptide: ATP synthase epsilon chain, chloroplastic (133 aa).

Belongs to the ATPase epsilon chain family. As to quaternary structure, F-type ATPases have 2 components, CF(1) - the catalytic core - and CF(0) - the membrane proton channel. CF(1) has five subunits: alpha(3), beta(3), gamma(1), delta(1), epsilon(1). CF(0) has three main subunits: a, b and c.

It localises to the plastid. It is found in the chloroplast thylakoid membrane. Its function is as follows. Produces ATP from ADP in the presence of a proton gradient across the membrane. The chain is ATP synthase epsilon chain, chloroplastic from Vitis vinifera (Grape).